The chain runs to 148 residues: Putative pre-16S rRNA nuclease (148 aa).

The protein belongs to the YqgF nuclease family.

It localises to the cytoplasm. Its function is as follows. Could be a nuclease involved in processing of the 5'-end of pre-16S rRNA. In Chlamydia trachomatis serovar A (strain ATCC VR-571B / DSM 19440 / HAR-13), this protein is Putative pre-16S rRNA nuclease.